The chain runs to 172 residues: MSSKKAKTKTTKKRPQRATSNVFAMFDQSQIQEFKEAFNMIDQNRDGFIDKEDLHDMLASLGKNPTDAYLDAMMNEAPGPINFTMFLTMFGEKLNGTDPEDVIRNAFACFDEEATGTIQEDYLRELLTTMGDRFTDEEVDELYREAPIDKKGNFNYIEFTRILKHGAKDKDD.

Residues 1-16 (MSSKKAKTKTTKKRPQ) show a composition bias toward basic residues. Residues 1–20 (MSSKKAKTKTTKKRPQRATS) form a disordered region. A Phosphothreonine; by MLCK and ZIPK/DAPK3 modification is found at T19. At S20 the chain carries Phosphoserine; by MLCK and ZIPK/DAPK3. EF-hand domains lie at 29-64 (SQIQEFKEAFNMIDQNRDGFIDKEDLHDMLASLGKN), 98-133 (DPEDVIRNAFACFDEEATGTIQEDYLRELLTTMGDR), and 134-169 (FTDEEVDELYREAPIDKKGNFNYIEFTRILKHGAKD). Residues D42, N44, D46, and D53 each coordinate Ca(2+).

Myosin is a hexamer of 2 heavy chains and 4 light chains: interacts with myosin heavy chain MYO19. Post-translationally, phosphorylation increases the actin-activated myosin ATPase activity and thereby regulates the contractile activity. It is required to generate the driving force in the migration of the cells but not necessary for localization of myosin-2 at the leading edge. Phosphorylation is reduced following epigallocatechin-3-O-gallate treatment. Ubiquitously expressed in various hematopoietic cells.

Its function is as follows. Myosin regulatory subunit that plays an important role in regulation of both smooth muscle and nonmuscle cell contractile activity via its phosphorylation. Phosphorylation triggers actin polymerization in vascular smooth muscle. Implicated in cytokinesis, receptor capping, and cell locomotion. In Homo sapiens (Human), this protein is Myosin regulatory light chain 12B (MYL12B).